Here is a 231-residue protein sequence, read N- to C-terminus: NDR1/HIN1-like protein 3 (231 aa).

Residues 47-67 (VIFNILITIAVLLGIAALIIW) traverse the membrane as a helical segment. Asn102, Asn135, Asn145, and Asn215 each carry an N-linked (GlcNAc...) asparagine glycan.

As to quaternary structure, may form oligomers or be a component of larger protein complex in plasma membranes. Post-translationally, glycosylated. In terms of tissue distribution, expressed in roots, young and senescing leaves, cauline leaves, stems and siliques.

The protein resides in the cell membrane. Confers resistance to Pseudomonas syringae pv. tomato DC3000 (Pst DC3000). This chain is NDR1/HIN1-like protein 3, found in Arabidopsis thaliana (Mouse-ear cress).